The sequence spans 200 residues: Small ribosomal subunit protein uS4 (200 aa).

The segment at 22–42 is disordered; that stretch reads TGKELEKRPYAPGPHGPNQRK. In terms of domain architecture, S4 RNA-binding spans 92-152; it reads ARLDNLVYRM…EKSRNLAVIK (61 aa).

Belongs to the universal ribosomal protein uS4 family. As to quaternary structure, part of the 30S ribosomal subunit. Contacts protein S5. The interaction surface between S4 and S5 is involved in control of translational fidelity.

One of the primary rRNA binding proteins, it binds directly to 16S rRNA where it nucleates assembly of the body of the 30S subunit. Functionally, with S5 and S12 plays an important role in translational accuracy. The protein is Small ribosomal subunit protein uS4 of Bacillus cytotoxicus (strain DSM 22905 / CIP 110041 / 391-98 / NVH 391-98).